The following is a 662-amino-acid chain: Retaining alpha-galactosidase (662 aa).

An N-terminal signal peptide occupies residues 1-19; the sequence is MKKLTFLLLCVLCTLSLQA. Ca(2+) is bound at residue Glu-174. The active-site Nucleophile is the Asp-415. Positions 464 and 470 each coordinate Ca(2+). Glu-470 acts as the Proton donor/acceptor in catalysis.

It belongs to the glycosyl hydrolase 97 family. As to quaternary structure, monomer. Ca(2+) serves as cofactor.

The enzyme catalyses Hydrolysis of terminal, non-reducing alpha-D-galactose residues in alpha-D-galactosides, including galactose oligosaccharides, galactomannans and galactolipids.. With respect to regulation, inhibited by EDTA in vitro. Functionally, galactosidase that is able to hydrolyze the alpha-1,6 disaccharide melibiose and the synthetic p-nitrophenyl alpha-galactoside substrate (pNP-Gal), with retention of the anomeric configuration. Does not hydrolyze DNP-Glc or pNP-Glc. The chain is Retaining alpha-galactosidase from Bacteroides thetaiotaomicron (strain ATCC 29148 / DSM 2079 / JCM 5827 / CCUG 10774 / NCTC 10582 / VPI-5482 / E50).